We begin with the raw amino-acid sequence, 203 residues long: 5-formyltetrahydrofolate cyclo-ligase (203 aa).

An N-acetylalanine modification is found at Ala2. Residues 10–14 (KRGLR) and Arg14 each bind ATP. Substrate-binding positions include Leu56, Glu61, and 148 to 152 (RGKGY). 145 to 153 (RLGRGKGYY) serves as a coordination point for ATP. 2 residues coordinate Mg(2+): Asp154 and Asp189.

Belongs to the 5-formyltetrahydrofolate cyclo-ligase family. Monomer. Requires Mg(2+) as cofactor.

Its subcellular location is the cytoplasm. The catalysed reaction is (6S)-5-formyl-5,6,7,8-tetrahydrofolate + ATP = (6R)-5,10-methenyltetrahydrofolate + ADP + phosphate. Its function is as follows. Contributes to tetrahydrofolate metabolism. Helps regulate carbon flow through the folate-dependent one-carbon metabolic network that supplies carbon for the biosynthesis of purines, thymidine and amino acids. Catalyzes the irreversible conversion of 5-formyltetrahydrofolate (5-CHO-H(4)PteGlu) to yield 5,10-methenyltetrahydrofolate. The chain is 5-formyltetrahydrofolate cyclo-ligase (Mthfs) from Mus musculus (Mouse).